The primary structure comprises 293 residues: Protein Pat (293 aa).

Residues 187–287 (LPDIILNPLD…LLLRTRQDRA (101 aa)) form the BEN domain.

In terms of assembly, interacts with poc1b. An mRNA and protein component of germ plasm and primordial germ cells (PGCs) throughout oogenesis and early development, being first localized to the granulo-fibrillar material (GFM) of the mitochondrial cloud in stage I and II oocytes and to the periphery of mature germinal granules both in oocytes and in embryos. Shows some somatic expression including the ectodermal cells of tailbud embryos. In adults, only expressed in ovaries.

Its subcellular location is the cytoplasm. It localises to the nucleus. Probably plays a role in germ plasm formation, positioning and maintenance. This chain is Protein Pat, found in Xenopus laevis (African clawed frog).